The following is a 410-amino-acid chain: Putative ribosomal large subunit pseudouridine synthase SVR1, chloroplastic (410 aa).

The N-terminal 35 residues, 1–35, are a transit peptide targeting the chloroplast; sequence MASVAASSSISFAASFLKIKAFPLSPRFFPIRTLR. Residues 96–143 form a disordered region; that stretch reads HNLAIDATTQNPKKKDKSKKKQPQATSSSSATTTASSPASHSEVKPKL. A compositionally biased stretch (basic residues) spans 107 to 117; that stretch reads PKKKDKSKKKQ. Positions 118-135 are enriched in low complexity; that stretch reads PQATSSSSATTTASSPAS. Positions 160–229 constitute an S4 RNA-binding domain; it reads QRLSKVLAAA…PKVYFALNKP (70 aa). Asp274 serves as the catalytic Nucleophile.

It belongs to the pseudouridine synthase RsuA family. In terms of tissue distribution, highly expressed in young seedlings. Expressed in roots, rosette leaves, cauline leaves, stems and flowers.

The protein resides in the plastid. The protein localises to the chloroplast. Responsible for synthesis of pseudouridine in chloroplastic 23S ribosomal RNA. Necessary for normal chloroplast rRNA processing and translation. Required for normal chloroplast development and maintenance. May function in other plastids, such as root amyloplasts. The sequence is that of Putative ribosomal large subunit pseudouridine synthase SVR1, chloroplastic (SVR1) from Arabidopsis thaliana (Mouse-ear cress).